Reading from the N-terminus, the 307-residue chain is tRNA pseudouridine synthase B (307 aa).

Asp38 (nucleophile) is an active-site residue.

This sequence belongs to the pseudouridine synthase TruB family. Type 1 subfamily.

It catalyses the reaction uridine(55) in tRNA = pseudouridine(55) in tRNA. Responsible for synthesis of pseudouridine from uracil-55 in the psi GC loop of transfer RNAs. This chain is tRNA pseudouridine synthase B, found in Bacillus cereus (strain ZK / E33L).